The primary structure comprises 168 residues: Large ribosomal subunit protein uL10 (168 aa).

It belongs to the universal ribosomal protein uL10 family. As to quaternary structure, part of the ribosomal stalk of the 50S ribosomal subunit. The N-terminus interacts with L11 and the large rRNA to form the base of the stalk. The C-terminus forms an elongated spine to which L12 dimers bind in a sequential fashion forming a multimeric L10(L12)X complex.

Functionally, forms part of the ribosomal stalk, playing a central role in the interaction of the ribosome with GTP-bound translation factors. The chain is Large ribosomal subunit protein uL10 from Acinetobacter baylyi (strain ATCC 33305 / BD413 / ADP1).